Reading from the N-terminus, the 268-residue chain is Orotidine 5'-phosphate decarboxylase (268 aa).

Substrate-binding positions include aspartate 38, lysine 60–histidine 62, aspartate 92–threonine 101, tyrosine 218, and arginine 236. The active-site Proton donor is the lysine 94.

This sequence belongs to the OMP decarboxylase family.

The catalysed reaction is orotidine 5'-phosphate + H(+) = UMP + CO2. The protein operates within pyrimidine metabolism; UMP biosynthesis via de novo pathway; UMP from orotate: step 2/2. The sequence is that of Orotidine 5'-phosphate decarboxylase (URA3) from Candida parapsilosis (Yeast).